Reading from the N-terminus, the 267-residue chain is GTP cyclohydrolase FolE2 (267 aa).

It belongs to the GTP cyclohydrolase IV family.

It catalyses the reaction GTP + H2O = 7,8-dihydroneopterin 3'-triphosphate + formate + H(+). Its pathway is cofactor biosynthesis; 7,8-dihydroneopterin triphosphate biosynthesis; 7,8-dihydroneopterin triphosphate from GTP: step 1/1. Converts GTP to 7,8-dihydroneopterin triphosphate. The chain is GTP cyclohydrolase FolE2 from Cupriavidus necator (strain ATCC 17699 / DSM 428 / KCTC 22496 / NCIMB 10442 / H16 / Stanier 337) (Ralstonia eutropha).